A 199-amino-acid polypeptide reads, in one-letter code: Pyridoxal 5'-phosphate synthase subunit PdxT (199 aa).

51–53 is an L-glutamine binding site; that stretch reads GES. Cys-83 acts as the Nucleophile in catalysis. Residues Arg-110 and 137 to 138 each bind L-glutamine; that span reads IR. Residues His-172 and Glu-174 each act as charge relay system in the active site.

This sequence belongs to the glutaminase PdxT/SNO family. In the presence of PdxS, forms a dodecamer of heterodimers. Only shows activity in the heterodimer.

The enzyme catalyses aldehydo-D-ribose 5-phosphate + D-glyceraldehyde 3-phosphate + L-glutamine = pyridoxal 5'-phosphate + L-glutamate + phosphate + 3 H2O + H(+). It carries out the reaction L-glutamine + H2O = L-glutamate + NH4(+). The protein operates within cofactor biosynthesis; pyridoxal 5'-phosphate biosynthesis. Functionally, catalyzes the hydrolysis of glutamine to glutamate and ammonia as part of the biosynthesis of pyridoxal 5'-phosphate. The resulting ammonia molecule is channeled to the active site of PdxS. This is Pyridoxal 5'-phosphate synthase subunit PdxT from Thermoplasma volcanium (strain ATCC 51530 / DSM 4299 / JCM 9571 / NBRC 15438 / GSS1).